Consider the following 193-residue polypeptide: Putative manganese efflux pump MntP (193 aa).

Helical transmembrane passes span 3–23, 41–61, 69–89, 107–127, 130–150, and 164–184; these read IFAVFLLAIALSMDAFAVAVV, AAFGFFQFAMPVIGWWLGVSV, DHWIAFVLLGWIGGKMALSGL, AGRNLVVLGVATSIDALAVGL, AILGTPIWADAAIIGIVCAVI, and LCALNGWAELAGGLTLLAIAC.

It belongs to the MntP (TC 9.B.29) family.

It localises to the cell inner membrane. Functionally, probably functions as a manganese efflux pump. The polypeptide is Putative manganese efflux pump MntP (Desulfovibrio desulfuricans (strain ATCC 27774 / DSM 6949 / MB)).